Reading from the N-terminus, the 338-residue chain is Aspartate carbamoyltransferase catalytic subunit (338 aa).

Positions 57 and 58 each coordinate carbamoyl phosphate. K86 is a binding site for L-aspartate. 3 residues coordinate carbamoyl phosphate: R107, H135, and Q138. L-aspartate is bound by residues R172 and R234. 2 residues coordinate carbamoyl phosphate: L274 and P275.

It belongs to the aspartate/ornithine carbamoyltransferase superfamily. ATCase family. In terms of assembly, heterododecamer (2C3:3R2) of six catalytic PyrB chains organized as two trimers (C3), and six regulatory PyrI chains organized as three dimers (R2).

The catalysed reaction is carbamoyl phosphate + L-aspartate = N-carbamoyl-L-aspartate + phosphate + H(+). The protein operates within pyrimidine metabolism; UMP biosynthesis via de novo pathway; (S)-dihydroorotate from bicarbonate: step 2/3. In terms of biological role, catalyzes the condensation of carbamoyl phosphate and aspartate to form carbamoyl aspartate and inorganic phosphate, the committed step in the de novo pyrimidine nucleotide biosynthesis pathway. The sequence is that of Aspartate carbamoyltransferase catalytic subunit from Cellvibrio japonicus (strain Ueda107) (Pseudomonas fluorescens subsp. cellulosa).